The following is a 191-amino-acid chain: Peptidyl-tRNA hydrolase (191 aa).

Tyr-16 is a tRNA binding site. The Proton acceptor role is filled by His-21. The tRNA site is built by Phe-66, Asn-68, and Asn-114.

It belongs to the PTH family. As to quaternary structure, monomer.

It is found in the cytoplasm. It catalyses the reaction an N-acyl-L-alpha-aminoacyl-tRNA + H2O = an N-acyl-L-amino acid + a tRNA + H(+). Its function is as follows. Hydrolyzes ribosome-free peptidyl-tRNAs (with 1 or more amino acids incorporated), which drop off the ribosome during protein synthesis, or as a result of ribosome stalling. In terms of biological role, catalyzes the release of premature peptidyl moieties from peptidyl-tRNA molecules trapped in stalled 50S ribosomal subunits, and thus maintains levels of free tRNAs and 50S ribosomes. This is Peptidyl-tRNA hydrolase from Geotalea uraniireducens (strain Rf4) (Geobacter uraniireducens).